The sequence spans 331 residues: Ribosomal RNA small subunit methyltransferase H (331 aa).

S-adenosyl-L-methionine-binding positions include glycine 39–tyrosine 41, aspartate 56, phenylalanine 83, aspartate 100, and glutamine 107.

The protein belongs to the methyltransferase superfamily. RsmH family.

It is found in the cytoplasm. The enzyme catalyses cytidine(1402) in 16S rRNA + S-adenosyl-L-methionine = N(4)-methylcytidine(1402) in 16S rRNA + S-adenosyl-L-homocysteine + H(+). Functionally, specifically methylates the N4 position of cytidine in position 1402 (C1402) of 16S rRNA. This Bartonella bacilliformis (strain ATCC 35685 / KC583 / Herrer 020/F12,63) protein is Ribosomal RNA small subunit methyltransferase H.